Here is a 725-residue protein sequence, read N- to C-terminus: Catalase-peroxidase (725 aa).

2 stretches are compositionally biased toward polar residues: residues 1–12 and 23–32; these read MSTSNDPSNNAS and PKQSAGSGTA. The N-terminal stretch at 1 to 20 is a signal peptide; it reads MSTSNDPSNNASAGKCPFHA. Residues 1–35 are disordered; sequence MSTSNDPSNNASAGKCPFHAETPKQSAGSGTANRD. The segment at residues 105-226 is a cross-link (tryptophyl-tyrosyl-methioninium (Trp-Tyr) (with M-252)); it reads WHGAGTYRTV…IGATEMGLIY (122 aa). Residue histidine 106 is the Proton acceptor of the active site. Residues 226–252 constitute a cross-link (tryptophyl-tyrosyl-methioninium (Tyr-Met) (with W-105)); it reads YVNPEGPNASGEPLSAAAAIRATFGNM. Residue histidine 267 coordinates heme b.

The protein belongs to the peroxidase family. Peroxidase/catalase subfamily. As to quaternary structure, homodimer or homotetramer. Heme b serves as cofactor. Formation of the three residue Trp-Tyr-Met cross-link is important for the catalase, but not the peroxidase activity of the enzyme.

It catalyses the reaction H2O2 + AH2 = A + 2 H2O. The catalysed reaction is 2 H2O2 = O2 + 2 H2O. In terms of biological role, bifunctional enzyme with both catalase and broad-spectrum peroxidase activity. The chain is Catalase-peroxidase from Klebsiella pneumoniae subsp. pneumoniae (strain ATCC 700721 / MGH 78578).